Consider the following 545-residue polypeptide: Gamma-curcumene synthase (545 aa).

Mg(2+)-binding residues include Asp299, Asp303, Asn442, and Glu450. The DDXXD motif motif lies at 299–303 (DDTYD).

Belongs to the terpene synthase family. It depends on Mg(2+) as a cofactor.

The protein resides in the cytoplasm. It localises to the cytosol. The catalysed reaction is (2E,6E)-farnesyl diphosphate = gamma-curcumene + diphosphate. It participates in secondary metabolite biosynthesis; terpenoid biosynthesis. In terms of biological role, sesquiterpene synthase involved in gamma-curcumene biosynthesis. The polypeptide is Gamma-curcumene synthase (Pogostemon cablin (Patchouli)).